The following is a 67-amino-acid chain: Putative selenoprotein YdfZ (67 aa).

Cys52 carries the S-selanylcysteine modification.

The sequence is that of Putative selenoprotein YdfZ (ydfZ) from Escherichia coli O6:H1 (strain CFT073 / ATCC 700928 / UPEC).